We begin with the raw amino-acid sequence, 380 residues long: Lipid-A-disaccharide synthase (380 aa).

It belongs to the LpxB family.

The catalysed reaction is a lipid X + a UDP-2-N,3-O-bis[(3R)-3-hydroxyacyl]-alpha-D-glucosamine = a lipid A disaccharide + UDP + H(+). The protein operates within bacterial outer membrane biogenesis; LPS lipid A biosynthesis. Condensation of UDP-2,3-diacylglucosamine and 2,3-diacylglucosamine-1-phosphate to form lipid A disaccharide, a precursor of lipid A, a phosphorylated glycolipid that anchors the lipopolysaccharide to the outer membrane of the cell. The polypeptide is Lipid-A-disaccharide synthase (Rickettsia typhi (strain ATCC VR-144 / Wilmington)).